Reading from the N-terminus, the 274-residue chain is Penicillin-insensitive murein endopeptidase (274 aa).

The signal sequence occupies residues 1-19 (MNKTAIALLALLASSASLA). Cystine bridges form between cysteine 44–cysteine 265, cysteine 187–cysteine 235, and cysteine 216–cysteine 223. Residues histidine 110, histidine 113, aspartate 120, aspartate 147, histidine 150, and histidine 211 each coordinate Zn(2+). The tract at residues 227-274 (PLPPPGDGCGAELQSWFEPPKPGTTKPEKKTPPPLPPSCQALLDEHVI) is disordered.

This sequence belongs to the peptidase M74 family. Dimer. The cofactor is Zn(2+).

It is found in the periplasm. Functionally, murein endopeptidase that cleaves the D-alanyl-meso-2,6-diamino-pimelyl amide bond that connects peptidoglycan strands. Likely plays a role in the removal of murein from the sacculus. In Escherichia coli (strain ATCC 8739 / DSM 1576 / NBRC 3972 / NCIMB 8545 / WDCM 00012 / Crooks), this protein is Penicillin-insensitive murein endopeptidase.